Reading from the N-terminus, the 486-residue chain is Bifunctional protein GlmU (486 aa).

The tract at residues 1-236 is pyrophosphorylase; it reads MTDQNLAIVV…SWLVDGINDR (236 aa). Residues 11 to 14, Lys25, Gln78, and 83 to 84 contribute to the UDP-N-acetyl-alpha-D-glucosamine site; these read LAAG and GT. Asp109 contacts Mg(2+). UDP-N-acetyl-alpha-D-glucosamine-binding residues include Gly146, Glu161, Asn176, and Asn234. Asn234 lines the Mg(2+) pocket. Positions 237-257 are linker; the sequence is AQLSEAAAKLNALTVRAWQLA. Residues 258 to 486 form an N-acetyltransferase region; that stretch reads GVTVQDPATT…ASNAAEESGE (229 aa). Arg339 and Lys357 together coordinate UDP-N-acetyl-alpha-D-glucosamine. His369 functions as the Proton acceptor in the catalytic mechanism. The UDP-N-acetyl-alpha-D-glucosamine site is built by Tyr372 and Asn383. Residues Ala386, 392-393, and Ala429 contribute to the acetyl-CoA site; that span reads NY. A disordered region spans residues 459–486; it reads RRPGTDAARAAQRNGAAEASNAAEESGE. Residues 465–486 are compositionally biased toward low complexity; sequence AARAAQRNGAAEASNAAEESGE.

It in the N-terminal section; belongs to the N-acetylglucosamine-1-phosphate uridyltransferase family. The protein in the C-terminal section; belongs to the transferase hexapeptide repeat family. Homotrimer. Mg(2+) serves as cofactor.

Its subcellular location is the cytoplasm. It carries out the reaction alpha-D-glucosamine 1-phosphate + acetyl-CoA = N-acetyl-alpha-D-glucosamine 1-phosphate + CoA + H(+). The enzyme catalyses N-acetyl-alpha-D-glucosamine 1-phosphate + UTP + H(+) = UDP-N-acetyl-alpha-D-glucosamine + diphosphate. The protein operates within nucleotide-sugar biosynthesis; UDP-N-acetyl-alpha-D-glucosamine biosynthesis; N-acetyl-alpha-D-glucosamine 1-phosphate from alpha-D-glucosamine 6-phosphate (route II): step 2/2. Its pathway is nucleotide-sugar biosynthesis; UDP-N-acetyl-alpha-D-glucosamine biosynthesis; UDP-N-acetyl-alpha-D-glucosamine from N-acetyl-alpha-D-glucosamine 1-phosphate: step 1/1. It functions in the pathway bacterial outer membrane biogenesis; LPS lipid A biosynthesis. Functionally, catalyzes the last two sequential reactions in the de novo biosynthetic pathway for UDP-N-acetylglucosamine (UDP-GlcNAc). The C-terminal domain catalyzes the transfer of acetyl group from acetyl coenzyme A to glucosamine-1-phosphate (GlcN-1-P) to produce N-acetylglucosamine-1-phosphate (GlcNAc-1-P), which is converted into UDP-GlcNAc by the transfer of uridine 5-monophosphate (from uridine 5-triphosphate), a reaction catalyzed by the N-terminal domain. This chain is Bifunctional protein GlmU, found in Leifsonia xyli subsp. xyli (strain CTCB07).